The chain runs to 620 residues: KIF-binding protein (620 aa).

Coiled-coil stretches lie at residues 30-64 and 133-169; these read YKSK…QDIL and LIKS…QLQN.

It belongs to the KIF-binding protein family.

The protein resides in the cytoplasm. It is found in the cytoskeleton. Functionally, activator of KIF1B plus-end-directed microtubule motor activity. Required for organization of axonal microtubules, and axonal outgrowth and maintenance during peripheral and central nervous system development. The protein is KIF-binding protein (kifbp) of Dictyostelium discoideum (Social amoeba).